A 289-amino-acid polypeptide reads, in one-letter code: Iodotyrosine deiodinase 1 (289 aa).

The chain crosses the membrane as a helical span at residues 1–21; sequence MFLLTPVLVAVVCILMVWIFK. FMN contacts are provided by residues 100 to 104 and 128 to 129; these read RRSVR and SG. Residues Ala-130, Glu-157, Tyr-161, and Lys-182 each coordinate 3,5-diiodo-L-tyrosine. 3-iodo-L-tyrosine contacts are provided by Ala-130, Glu-157, Tyr-161, and Lys-182. FMN is bound by residues 237 to 239 and Arg-279; that span reads TTT.

This sequence belongs to the nitroreductase family. In terms of assembly, homodimer. The cofactor is FMN. In terms of tissue distribution, detected in thyroid (at protein level).

It localises to the cell membrane. The protein resides in the cytoplasmic vesicle membrane. It catalyses the reaction 2 iodide + L-tyrosine + 2 NADP(+) = 3,5-diiodo-L-tyrosine + 2 NADPH + H(+). The catalysed reaction is iodide + L-tyrosine + NADP(+) = 3-iodo-L-tyrosine + NADPH. It carries out the reaction 3-iodo-L-tyrosine + iodide + NADP(+) = 3,5-diiodo-L-tyrosine + NADPH + H(+). The enzyme catalyses L-tyrosine + chloride + NADP(+) = 3-chloro-L-tyrosine + NADPH. It catalyses the reaction bromide + L-tyrosine + NADP(+) = 3-bromo-L-tyrosine + NADPH. Functionally, catalyzes the dehalogenation of halotyrosines such as 3-bromo-L-tyrosine, 3-chloro-L-tyrosine, 3-iodo-L-tyrosine and 3,5-diiodo-L-tyrosine. During thyroid hormone biosynthesis, facilitates iodide salvage by catalysing the oxidative NADPH-dependent deiodination of the halogenated by-products of thyroid hormone production, monoiodotyrosine (L-MIT) and diiodotyrosine (L-DIT). The scavanged iodide can then reenter the hormone-producing pathways. Acts more efficiently on 3-iodo-L-tyrosine than 3,5-diiodo-L-tyrosine. The polypeptide is Iodotyrosine deiodinase 1 (IYD) (Sus scrofa (Pig)).